The sequence spans 481 residues: 7-deoxyloganetin glucosyltransferase (481 aa).

Catalysis depends on His22, which acts as the Proton acceptor. His22 is an an anthocyanidin binding site. Asp126 acts as the Charge relay in catalysis. Residues Thr148, Gln363, His378, Trp381, Asn382, Ser383, and Glu386 each coordinate UDP-alpha-D-glucose. Ala401 lines the an anthocyanidin pocket. Residues Glu402 and Gln403 each contribute to the UDP-alpha-D-glucose site.

Belongs to the UDP-glycosyltransferase family. In terms of tissue distribution, ubiquitous. Very low expression in stems.

The catalysed reaction is 7-deoxyloganetin + UDP-alpha-D-glucose = 7-deoxyloganin + UDP + H(+). In terms of biological role, iridoid glucosyltransferase acting on genipin and 7-deoxyloganetin. No activity with 7-deoxyloganetic acid. Involved in geniposide biosynthesis. This Gardenia jasminoides (Cape jasmine) protein is 7-deoxyloganetin glucosyltransferase (UGT85A24).